A 250-amino-acid chain; its full sequence is Cysteine proteinase inhibitor 12 (250 aa).

An N-terminal signal peptide occupies residues 1–32; sequence MRVAATTRPASSSAAAPLPLFLLLAVAAAAAA. 2 consecutive Cystatin domains span residues 49–137 and 156–202; these read GGAH…RNTG and PGWR…AEVV. The Secondary area of contact signature appears at 93–97; that stretch reads QVVAG.

The protein belongs to the cystatin family. Phytocystatin subfamily.

The protein localises to the secreted. Its function is as follows. Specific inhibitor of cysteine proteinases. Probably involved in the regulation of endogenous processes and in defense against pests and pathogens. The polypeptide is Cysteine proteinase inhibitor 12 (Oryza sativa subsp. japonica (Rice)).